The chain runs to 562 residues: Adenylate kinase isoenzyme 5 (562 aa).

2 adenylate kinase regions span residues 133–316 (KIIL…MAVD) and 377–559 (KIIF…TAID). 142 to 147 (GSGKGT) serves as a coordination point for ATP. The tract at residues 162 to 193 (SVGELLRKKIHSTSSNRKWSLIAKIITTGELA) is NMP 1. AMP is bound by residues R168, 191-193 (ELA), 219-222 (GFPR), and Q226. The interval 256–266 (KRAEQQGRPDD) is LID 1. R257 contacts ATP. Positions 263 and 274 each coordinate AMP. Residue 386 to 391 (GSGKGT) participates in ATP binding. The tract at residues 406-435 (STGELLREELASESERSKLIRDIMERGDLV) is NMP 2. AMP-binding positions include T407, R412, 433–435 (DLV), 462–465 (GYPR), and Q469. The tract at residues 499–509 (QRSRSSLPVDD) is LID 2. R500 is a binding site for ATP. R517 serves as a coordination point for AMP. G545 lines the ATP pocket.

This sequence belongs to the adenylate kinase family. Monomer. Interacts with YWHAZ. In terms of tissue distribution, brain specific.

It is found in the cytoplasm. The catalysed reaction is AMP + ATP = 2 ADP. It carries out the reaction a 2'-deoxyribonucleoside 5'-diphosphate + ATP = a 2'-deoxyribonucleoside 5'-triphosphate + ADP. The enzyme catalyses a ribonucleoside 5'-diphosphate + ATP = a ribonucleoside 5'-triphosphate + ADP. Functionally, nucleoside monophosphate (NMP) kinase that catalyzes the reversible transfer of the terminal phosphate group between nucleoside triphosphates and monophosphates. Active on AMP and dAMP with ATP as a donor. When GTP is used as phosphate donor, the enzyme phosphorylates AMP, CMP, and to a small extent dCMP. Also displays broad nucleoside diphosphate kinase activity. The chain is Adenylate kinase isoenzyme 5 (AK5) from Homo sapiens (Human).